Reading from the N-terminus, the 422-residue chain is Testin (422 aa).

Residues 92–199 (MILTNPVPAK…GDVKLPGELE (108 aa)) enclose the PET domain. The disordered stretch occupies residues 198–224 (LETKATDKNNVNSGDRSTSAAVGAMED). Residues 205-217 (KNNVNSGDRSTSA) are compositionally biased toward polar residues. LIM zinc-binding domains lie at 234-297 (YSCY…CDSE), 299-359 (PRCA…KHAA), and 362-422 (QGCH…KMMS).

The protein belongs to the prickle / espinas / testin family.

Its subcellular location is the cytoplasm. It is found in the cell junction. The protein resides in the focal adhesion. Scaffold protein that may play a role in cell adhesion, cell spreading and in the reorganization of the actin cytoskeleton. May play a role in the regulation of cell proliferation. May inhibit cell growth. This is Testin (TES) from Gallus gallus (Chicken).